Reading from the N-terminus, the 482-residue chain is MFDALADRLEDAWKKLRGQDKISESNIKEALQEVRRALLAADVNLQVVKGFIKDVEQKALGADVISGVNPGQQFIKIVYDELVNLMGESNVPLAQAEQAPTVILMAGLQGTGKTTATAKLALYLRKQKRSALMVATDVYRPAAIDQLKTLGQQIDVPVFDLGSDANPVEIARQGVEKAKELGVDTVLIDTAGRLQIDPQMMAELAEIKQVVKPDDTLLVVDAMTGQEAANLTHTFHEQIGITGAILTKLDGDTRGGAALSVRQISGQPIKFVGVGEKVEALQPFYPDRLASRILNMGDVLTLVEKAQEAIDVGDVEKLQNKILEATFDFDDFIKQMRFMKNMGSLGGLLKMIPGMNKLSSGDIEKGEKELKRTEAMISSMTTEERKNPDLLAKSPSRRRRIAQGSGHSETDVSKLITNFTKMRTMMQQMGMGGMPGGMPGMGAMPGMGGGMFGGQPGPGFRGYRGGGGKPKKKKKKKGFGQL.

Residues 107-114 (GLQGTGKT), 189-193 (DTAGR), and 247-250 (TKLD) each bind GTP. Disordered regions lie at residues 380–413 (MTTE…TDVS) and 452–482 (FGGQ…FGQL). The segment covering 452–468 (FGGQPGPGFRGYRGGGG) has biased composition (gly residues). Over residues 469-482 (KPKKKKKKKGFGQL) the composition is skewed to basic residues.

Belongs to the GTP-binding SRP family. SRP54 subfamily. In terms of assembly, part of the signal recognition particle protein translocation system, which is composed of SRP and FtsY.

Its subcellular location is the cytoplasm. It carries out the reaction GTP + H2O = GDP + phosphate + H(+). In terms of biological role, involved in targeting and insertion of nascent membrane proteins into the cytoplasmic membrane. Binds to the hydrophobic signal sequence of the ribosome-nascent chain (RNC) as it emerges from the ribosomes. The SRP-RNC complex is then targeted to the cytoplasmic membrane where it interacts with the SRP receptor FtsY. This is Signal recognition particle protein from Synechocystis sp. (strain ATCC 27184 / PCC 6803 / Kazusa).